Here is a 158-residue protein sequence, read N- to C-terminus: Rhombotin-2 (158 aa).

LIM zinc-binding domains are found at residues 30–89 (CGGC…RLFG) and 94–153 (CASC…EWTK).

In terms of assembly, interacts with BEX2 and KDM5A. Interacts via its LIM domains with ELF2 and LDB1. Also interacts with basic helix-loop-helix protein TAL1/SCL and can assemble in a complex with LMO2 and TAL1/SCL. As to expression, expressed in early mouse development in central nervous system, lung, kidney, liver and spleen but only very low levels occur in thymus.

It is found in the nucleus. Its function is as follows. Acts with TAL1/SCL to regulate red blood cell development. Also acts with LDB1 to maintain erythroid precursors in an immature state. The chain is Rhombotin-2 (Lmo2) from Mus musculus (Mouse).